Reading from the N-terminus, the 146-residue chain is uncharacterized protein (146 aa).

The helical transmembrane segment at 7-27 threads the bilayer; the sequence is FVLSITIVLVILIIIAFIWYN.

Belongs to the asfivirus E146L family.

Its subcellular location is the host membrane. The protein resides in the virion. This is an uncharacterized protein from African swine fever virus (strain Badajoz 1971 Vero-adapted) (Ba71V).